A 286-amino-acid chain; its full sequence is Ribose-phosphate pyrophosphokinase (286 aa).

ATP contacts are provided by residues 34 to 36 and 91 to 93; these read DGE and RQH. Mg(2+) is bound by residues H124 and D161. K184 is an active-site residue. D-ribose 5-phosphate is bound by residues R186, D210, and 214-218; that span reads STGGT.

It belongs to the ribose-phosphate pyrophosphokinase family. Class III (archaeal) subfamily. Homodimer. Requires Mg(2+) as cofactor.

The protein resides in the cytoplasm. The enzyme catalyses D-ribose 5-phosphate + ATP = 5-phospho-alpha-D-ribose 1-diphosphate + AMP + H(+). It participates in metabolic intermediate biosynthesis; 5-phospho-alpha-D-ribose 1-diphosphate biosynthesis; 5-phospho-alpha-D-ribose 1-diphosphate from D-ribose 5-phosphate (route I): step 1/1. Involved in the biosynthesis of the central metabolite phospho-alpha-D-ribosyl-1-pyrophosphate (PRPP) via the transfer of pyrophosphoryl group from ATP to 1-hydroxyl of ribose-5-phosphate (Rib-5-P). This chain is Ribose-phosphate pyrophosphokinase, found in Thermoplasma volcanium (strain ATCC 51530 / DSM 4299 / JCM 9571 / NBRC 15438 / GSS1).